Reading from the N-terminus, the 341-residue chain is MTDPFTSDGAKMPPKPFTVEEGRRQVRSFVLRQGRFTPAQQRAFDDLWPRFGLDYTGAPRDLAATFGRDAHKVLEIGFGNGAALRFAAQQDPSRDYIGIEVHAPGVGRLLNALDEDGSTHVRLYHHDAVEVLEHEIADGALDEVRIYFPDPWHKKRHNKRRLIQPAFAQLLVRKLREGGRLHAATDWADYAEQMWDVLDATPGLVNRAGPRGHVERPAWRPQTHFETRGQKLGHGVWDLLYDRDSGIGNRKGNCPRRPDNPQRPQFSLCQFPIPDSPFPAPNGHRADADQRYEARPRAGRFHDGDVPVRAHSRRRGGIDRAGGLGRHRTGGAGRIVRRFLR.

Residues glutamate 75, glutamate 100, aspartate 127, and aspartate 150 each coordinate S-adenosyl-L-methionine. The active site involves aspartate 150. Residue lysine 154 participates in substrate binding. Residues 156 to 161 (RHNKRR) form an interaction with RNA region. Aspartate 186 provides a ligand contact to substrate.

This sequence belongs to the class I-like SAM-binding methyltransferase superfamily. TrmB family.

The catalysed reaction is guanosine(46) in tRNA + S-adenosyl-L-methionine = N(7)-methylguanosine(46) in tRNA + S-adenosyl-L-homocysteine. It participates in tRNA modification; N(7)-methylguanine-tRNA biosynthesis. In terms of biological role, catalyzes the formation of N(7)-methylguanine at position 46 (m7G46) in tRNA. The chain is tRNA (guanine-N(7)-)-methyltransferase from Xanthomonas euvesicatoria pv. vesicatoria (strain 85-10) (Xanthomonas campestris pv. vesicatoria).